The chain runs to 437 residues: tRNA-2-methylthio-N(6)-dimethylallyladenosine synthase (437 aa).

An MTTase N-terminal domain is found at 1–115 (MKVYIETMGC…ISQVIHKEKA (115 aa)). The [4Fe-4S] cluster site is built by Cys-10, Cys-46, Cys-78, Cys-148, Cys-152, and Cys-155. In terms of domain architecture, Radical SAM core spans 134–367 (KKAQIRSLLN…QNRHKEILEE (234 aa)). The 67-residue stretch at 370–436 (KLEVGKTHVV…KGRLIAAIKG (67 aa)) folds into the TRAM domain.

It belongs to the methylthiotransferase family. MiaB subfamily. As to quaternary structure, monomer. It depends on [4Fe-4S] cluster as a cofactor.

It is found in the cytoplasm. It carries out the reaction N(6)-dimethylallyladenosine(37) in tRNA + (sulfur carrier)-SH + AH2 + 2 S-adenosyl-L-methionine = 2-methylsulfanyl-N(6)-dimethylallyladenosine(37) in tRNA + (sulfur carrier)-H + 5'-deoxyadenosine + L-methionine + A + S-adenosyl-L-homocysteine + 2 H(+). Its function is as follows. Catalyzes the methylthiolation of N6-(dimethylallyl)adenosine (i(6)A), leading to the formation of 2-methylthio-N6-(dimethylallyl)adenosine (ms(2)i(6)A) at position 37 in tRNAs that read codons beginning with uridine. This chain is tRNA-2-methylthio-N(6)-dimethylallyladenosine synthase, found in Helicobacter pylori (strain P12).